Here is a 100-residue protein sequence, read N- to C-terminus: Aspartyl/glutamyl-tRNA(Asn/Gln) amidotransferase subunit C (100 aa).

The protein belongs to the GatC family. As to quaternary structure, heterotrimer of A, B and C subunits.

The enzyme catalyses L-glutamyl-tRNA(Gln) + L-glutamine + ATP + H2O = L-glutaminyl-tRNA(Gln) + L-glutamate + ADP + phosphate + H(+). It carries out the reaction L-aspartyl-tRNA(Asn) + L-glutamine + ATP + H2O = L-asparaginyl-tRNA(Asn) + L-glutamate + ADP + phosphate + 2 H(+). Allows the formation of correctly charged Asn-tRNA(Asn) or Gln-tRNA(Gln) through the transamidation of misacylated Asp-tRNA(Asn) or Glu-tRNA(Gln) in organisms which lack either or both of asparaginyl-tRNA or glutaminyl-tRNA synthetases. The reaction takes place in the presence of glutamine and ATP through an activated phospho-Asp-tRNA(Asn) or phospho-Glu-tRNA(Gln). The sequence is that of Aspartyl/glutamyl-tRNA(Asn/Gln) amidotransferase subunit C from Streptococcus pneumoniae (strain Taiwan19F-14).